A 278-amino-acid chain; its full sequence is Inosose isomerase (278 aa).

A divalent metal cation-binding residues include glutamate 142, aspartate 174, histidine 200, and glutamate 246.

It belongs to the IolI family. Requires Mn(2+) as cofactor. It depends on Fe(2+) as a cofactor. Co(2+) is required as a cofactor.

It catalyses the reaction scyllo-inosose = scyllo-inosine. Its pathway is polyol metabolism; myo-inositol degradation into acetyl-CoA. Functionally, involved in the reversible interconverion of 2-keto-myo-inositol (2KMI, inosose or 2,4,6/3,5-pentahydroxycyclohexanone) to 1-keto-D-chiro-inositol (1KDCI or 2,3,5/4,6-pentahydroxycyclohexanone). The sequence is that of Inosose isomerase (iolI) from Bacillus subtilis (strain 168).